Here is a 430-residue protein sequence, read N- to C-terminus: Trigger factor (430 aa).

The 86-residue stretch at 157 to 242 (GDLVALETWS…AVEVSEPVLP (86 aa)) folds into the PPIase FKBP-type domain.

It belongs to the FKBP-type PPIase family. Tig subfamily.

Its subcellular location is the cytoplasm. It carries out the reaction [protein]-peptidylproline (omega=180) = [protein]-peptidylproline (omega=0). Functionally, involved in protein export. Acts as a chaperone by maintaining the newly synthesized protein in an open conformation. Functions as a peptidyl-prolyl cis-trans isomerase. This chain is Trigger factor, found in Xanthomonas campestris pv. campestris (strain ATCC 33913 / DSM 3586 / NCPPB 528 / LMG 568 / P 25).